We begin with the raw amino-acid sequence, 342 residues long: tRNA dimethylallyltransferase (342 aa).

Residue 39-46 (GPTGSGKT) participates in ATP binding. 41–46 (TGSGKT) contributes to the substrate binding site. Residues 64 to 67 (DSMQ) form an interaction with substrate tRNA region.

It belongs to the IPP transferase family. Monomer. It depends on Mg(2+) as a cofactor.

It catalyses the reaction adenosine(37) in tRNA + dimethylallyl diphosphate = N(6)-dimethylallyladenosine(37) in tRNA + diphosphate. Its function is as follows. Catalyzes the transfer of a dimethylallyl group onto the adenine at position 37 in tRNAs that read codons beginning with uridine, leading to the formation of N6-(dimethylallyl)adenosine (i(6)A). This is tRNA dimethylallyltransferase from Chlamydia caviae (strain ATCC VR-813 / DSM 19441 / 03DC25 / GPIC) (Chlamydophila caviae).